A 360-amino-acid polypeptide reads, in one-letter code: Mitogen-activated protein kinase 1 (360 aa).

A2 is subject to N-acetylalanine. A Protein kinase domain is found at 25 to 313; the sequence is YTNLSYIGEG…VEQALAHPYL (289 aa). S29 carries the phosphoserine; by SGK1 modification. ATP is bound by residues 31–39 and K54; that span reads IGEGAYGMV. D149 serves as the catalytic Proton acceptor. The residue at position 185 (T185) is a Phosphothreonine; by MAP2K1 and MAP2K2. The TXY motif lies at 185 to 187; sequence TEY. Phosphotyrosine; by MAP2K1 and MAP2K2 is present on Y187. Position 190 is a phosphothreonine; by autocatalysis (T190). 2 positions are modified to phosphoserine: S246 and S248. Residues 259-277 mediate DNA binding; that stretch reads KARNYLLSLPHKNKVPWNR. S284 carries the phosphoserine modification. The Cytoplasmic retention motif signature appears at 318 to 322; that stretch reads DPSDE. Residues 327 to 333 carry the Nuclear translocation motif motif; that stretch reads APFKFDM.

The protein belongs to the protein kinase superfamily. CMGC Ser/Thr protein kinase family. MAP kinase subfamily. As to quaternary structure, binds both upstream activators and downstream substrates in multimolecular complexes. This interaction inhibits its tyrosine-kinase activity. Interacts with ADAM15, ARHGEF2, ARRB2, DAPK1 (via death domain), HSF4, IER3, IPO7, NISCH, SGK1, and isoform 1 of NEK2. Interacts (via phosphorylated form) with TPR (via C-terminal region and phosphorylated form); the interaction requires dimerization of MAPK1/ERK2 and increases following EGF stimulation. Interacts with MAP2K1. Interacts with DUSP6. Interacts (phosphorylated form) with CAV2 ('Tyr-19'-phosphorylated form); the interaction, promoted by insulin, leads to nuclear location and MAPK1 activation. Interacts with MORG1, PEA15 and MKNK2. MKNK2 isoform 1 binding prevents from dephosphorylation and inactivation. Interacts with DCC. The phosphorylated form interacts with PML (isoform PML-4). Interacts with STYX. Interacts with CDK2AP2. Interacts with CAVIN4. Interacts with DUSP7; the interaction enhances DUSP7 phosphatase activity. Interacts with GIT1; this interaction is necessary for MAPK1 localization to focal adhesions. Interacts with ZNF263. Interacts with phosphoglycerate kinase PGK1; the interaction is direct, occurs under hypoxic conditions, and promotes interaction between PGK1 and PIN1. (Microbial infection) Interacts with HIV-1 Nef through its SH3 domain. The cofactor is Mg(2+). Post-translationally, phosphorylated upon KIT and FLT3 signaling. Dually phosphorylated on Thr-185 and Tyr-187, which activates the enzyme. Undergoes regulatory phosphorylation on additional residues such as Ser-246 and Ser-248 in the kinase insert domain (KID) These phosphorylations, which are probably mediated by more than one kinase, are important for binding of MAPK1/ERK2 to importin-7 (IPO7) and its nuclear translocation. In addition, autophosphorylation of Thr-190 was shown to affect the subcellular localization of MAPK1/ERK2 as well. Ligand-activated ALK induces tyrosine phosphorylation. Dephosphorylated by PTPRJ at Tyr-187. Phosphorylation on Ser-29 by SGK1 results in its activation by enhancing its interaction with MAP2K1/MEK1 and MAP2K2/MEK2. DUSP3 and DUSP6 dephosphorylate specifically MAPK1/ERK2 and MAPK3/ERK1 whereas DUSP9 dephosphorylates a broader range of MAPKs. Dephosphorylated by DUSP1 and DUSP2 at Thr-185 and Tyr-187. In terms of processing, ISGylated. Ubiquitinated by TRIM15 via 'Lys-63'-linked ubiquitination; leading to activation. Deubiquitinated by CYLD.

Its subcellular location is the cytoplasm. It localises to the cytoskeleton. It is found in the spindle. The protein localises to the nucleus. The protein resides in the microtubule organizing center. Its subcellular location is the centrosome. It localises to the membrane. It is found in the caveola. The protein localises to the cell junction. The protein resides in the focal adhesion. The enzyme catalyses L-seryl-[protein] + ATP = O-phospho-L-seryl-[protein] + ADP + H(+). The catalysed reaction is L-threonyl-[protein] + ATP = O-phospho-L-threonyl-[protein] + ADP + H(+). Its activity is regulated as follows. Phosphorylated by MAP2K1/MEK1 and MAP2K2/MEK2 on Thr-185 and Tyr-187 in response to external stimuli like insulin or NGF. Both phosphorylations are required for activity. This phosphorylation causes dramatic conformational changes, which enable full activation and interaction of MAPK1/ERK2 with its substrates. Phosphorylation on Ser-29 by SGK1 results in its activation by enhancing its interaction with MAP2K1/MEK1 and MAP2K2/MEK2. Dephosphorylated and inactivated by DUSP1, DUSP3, DUSP6 and DUSP9. Inactivated by pyrimidylpyrrole inhibitors. Serine/threonine kinase which acts as an essential component of the MAP kinase signal transduction pathway. MAPK1/ERK2 and MAPK3/ERK1 are the 2 MAPKs which play an important role in the MAPK/ERK cascade. They participate also in a signaling cascade initiated by activated KIT and KITLG/SCF. Depending on the cellular context, the MAPK/ERK cascade mediates diverse biological functions such as cell growth, adhesion, survival and differentiation through the regulation of transcription, translation, cytoskeletal rearrangements. The MAPK/ERK cascade also plays a role in initiation and regulation of meiosis, mitosis, and postmitotic functions in differentiated cells by phosphorylating a number of transcription factors. About 160 substrates have already been discovered for ERKs. Many of these substrates are localized in the nucleus, and seem to participate in the regulation of transcription upon stimulation. However, other substrates are found in the cytosol as well as in other cellular organelles, and those are responsible for processes such as translation, mitosis and apoptosis. Moreover, the MAPK/ERK cascade is also involved in the regulation of the endosomal dynamics, including lysosome processing and endosome cycling through the perinuclear recycling compartment (PNRC); as well as in the fragmentation of the Golgi apparatus during mitosis. The substrates include transcription factors (such as ATF2, BCL6, ELK1, ERF, FOS, HSF4 or SPZ1), cytoskeletal elements (such as CANX, CTTN, GJA1, MAP2, MAPT, PXN, SORBS3 or STMN1), regulators of apoptosis (such as BAD, BTG2, CASP9, DAPK1, IER3, MCL1 or PPARG), regulators of translation (such as EIF4EBP1 and FXR1) and a variety of other signaling-related molecules (like ARHGEF2, DCC, FRS2 or GRB10). Protein kinases (such as RAF1, RPS6KA1/RSK1, RPS6KA3/RSK2, RPS6KA2/RSK3, RPS6KA6/RSK4, SYK, MKNK1/MNK1, MKNK2/MNK2, RPS6KA5/MSK1, RPS6KA4/MSK2, MAPKAPK3 or MAPKAPK5) and phosphatases (such as DUSP1, DUSP4, DUSP6 or DUSP16) are other substrates which enable the propagation the MAPK/ERK signal to additional cytosolic and nuclear targets, thereby extending the specificity of the cascade. Mediates phosphorylation of TPR in response to EGF stimulation. May play a role in the spindle assembly checkpoint. Phosphorylates PML and promotes its interaction with PIN1, leading to PML degradation. Phosphorylates CDK2AP2. Phosphorylates phosphoglycerate kinase PGK1 under hypoxic conditions to promote its targeting to the mitochondrion and suppress the formation of acetyl-coenzyme A from pyruvate. In terms of biological role, acts as a transcriptional repressor. Binds to a [GC]AAA[GC] consensus sequence. Repress the expression of interferon gamma-induced genes. Seems to bind to the promoter of CCL5, DMP1, IFIH1, IFITM1, IRF7, IRF9, LAMP3, OAS1, OAS2, OAS3 and STAT1. Transcriptional activity is independent of kinase activity. The polypeptide is Mitogen-activated protein kinase 1 (Homo sapiens (Human)).